Reading from the N-terminus, the 1317-residue chain is uncharacterized protein (1317 aa).

The protein belongs to the oxoprolinase family.

This is an uncharacterized protein from Schizosaccharomyces pombe (strain 972 / ATCC 24843) (Fission yeast).